The following is a 614-amino-acid chain: Leucine aminopeptidase 2 (614 aa).

Residues 139 to 141 and 271 to 276 contribute to the a peptide site; these read QCQ and PYGGME. Residue H300 participates in Zn(2+) binding. E301 (proton acceptor) is an active-site residue. The Zn(2+) site is built by H304 and E323. Y385 acts as the Proton donor in catalysis.

It belongs to the peptidase M1 family. Zn(2+) is required as a cofactor.

It is found in the cytoplasm. It localises to the nucleus. It catalyses the reaction an epoxide + H2O = an ethanediol. Functionally, aminopeptidase that preferentially cleaves di- and tripeptides. Also has low epoxide hydrolase activity (in vitro). Can hydrolyze the epoxide leukotriene LTA(4) but it forms preferentially 5,6-dihydroxy-7,9,11,14-eicosatetraenoic acid rather than the cytokine leukotriene B(4) as the product compared to the homologous mammalian enzyme (in vitro). The chain is Leucine aminopeptidase 2 from Aspergillus fumigatus (strain ATCC MYA-4609 / CBS 101355 / FGSC A1100 / Af293) (Neosartorya fumigata).